Reading from the N-terminus, the 646-residue chain is Sulfate transporter 3.2 (646 aa).

Residues 1–76 lie on the Cytoplasmic side of the membrane; the sequence is MSSKRASQYH…GYSLEYLKSD (76 aa). Residues 77–97 form a helical membrane-spanning segment; sequence VISGITIASLAIPQGISYAQL. Residues 98–99 are Extracellular-facing; sequence AN. The chain crosses the membrane as a helical span at residues 100 to 120; the sequence is LPPILGLYSSLVPPLVYAIMG. Residues 121 to 124 lie on the Cytoplasmic side of the membrane; sequence SSRD. Residues 125–145 form a helical membrane-spanning segment; that stretch reads LAVGTVAVASLLTAAMLGKEV. Over 146–154 the chain is Extracellular; that stretch reads NAVVNPKLY. The chain crosses the membrane as a helical span at residues 155-175; that stretch reads LHLAFTATFFAGLMQTCLGLL. Position 176 (R176) is a topological domain, cytoplasmic. Residues 177-197 traverse the membrane as a helical segment; sequence LGFVVEILSHAAIVGFMGGAA. Topologically, residues 198-235 are extracellular; that stretch reads TVVCLQQLKGLLGLHHFTHSTDIVTVLRSIFSQSHMWR. Residues 236–256 form a helical membrane-spanning segment; the sequence is WESGVLGCCFLIFLLTTKYIS. Residues 257-262 lie on the Cytoplasmic side of the membrane; that stretch reads KKRPKL. The helical transmembrane segment at 263-283 threads the bilayer; sequence FWISAMSPLVSVIFGTIFLYF. At 284-315 the chain is on the extracellular side; that stretch reads LHDQFHGIQFIGELKKGINPPSITHLVFTPPY. Residues 316–336 traverse the membrane as a helical segment; the sequence is VMLALKVGIITGVIALAEGIA. The Cytoplasmic portion of the chain corresponds to 337–354; that stretch reads VGRSFAMYKNYNIDGNKE. A helical membrane pass occupies residues 355–375; that stretch reads MIAFGMMNILGSFSSCYLTTG. Over 376–390 the chain is Extracellular; it reads PFSRSAVNYNAGCKT. 2 helical membrane passes run 391-411 and 412-432; these read ALSNVVMAVAVAVTLLFLTPL and FFYTPLVVLSSIIIAAMLGLV. At 433-447 the chain is on the extracellular side; the sequence is DYEAAIHLWKLDKFD. The chain crosses the membrane as a helical span at residues 448 to 468; that stretch reads FFVCLSAYLGVVFGTIEIGLI. Residues 469-646 lie on the Cytoplasmic side of the membrane; the sequence is LSVGISVMRL…DSPVPEFNNV (178 aa). Positions 504 to 627 constitute an STAS domain; it reads HYPQAITRSS…LTVAEAVAAC (124 aa).

This sequence belongs to the SLC26A/SulP transporter (TC 2.A.53) family. As to expression, expressed only in leaves.

It is found in the membrane. In terms of biological role, h(+)/sulfate cotransporter that may play a role in the regulation of sulfate assimilation. The sequence is that of Sulfate transporter 3.2 (SULTR3;2) from Arabidopsis thaliana (Mouse-ear cress).